Here is a 292-residue protein sequence, read N- to C-terminus: GID complex substrate-recognition subunit 10 (292 aa).

Belongs to the GID4/VID24 family. In terms of assembly, substrate-recognition component of the GID/CTLH ubiquitin ligase complex. In the absence of stress, the complex exists as an inactive anticipatory complex (GID(Ant)), composed of VID30/GID1, the E3 ubiquitin-ligase RMD5/GID2, VID28/GID5, GID8, and the RING-like subunit FYV10/GID9, awaiting a substrate receptor to form the active E3 ligase complex. When cells are shifted to glucose-containing medium, the substrate receptor VID24/GID4 is induced and becomes part of the complex, named GID(SR4). Under osmotic or heat stress, the substrate receptor GID10 is induced and becomes part of the complex, named GID(SR10). Interacts with proteins that have an N-terminal Pro/N-degron, including ART2.

Functionally, substrate-recognition component of the GID E3 ligase complex recruiting N termini and catalyzing ubiquitination of proteins targeted for degradation. GID E3 is regulated through assembly with interchangeable N-degron-binding substrate receptors induced by distinct environmental perturbations. Required for the adaptation to osmotic or heat stress. Required for the regulation of protein levels of the adapter protein ART2, a component of the ART-Rsp5 ubiquitin ligase pathway, part of the plasma membrane quality control. Specific for substrates with an N-terminal Pro (Pro/N-degron), including ART2. Has high affinity for the N-terminal sequence Pro-Tyr-Ile-Thr, and also recognizes nonproline residues such as Met-Tyr-Ile-Thr-Val or Val-Cys-Phe-His. In Saccharomyces cerevisiae (strain ATCC 204508 / S288c) (Baker's yeast), this protein is GID complex substrate-recognition subunit 10.